The chain runs to 740 residues: Dynein regulatory complex protein 1 (740 aa).

A coiled-coil region spans residues 101 to 388 (IDIREIHRRV…QFKELQKAMR (288 aa)). Residues 570–617 (ASMEKASMEETSTRSELELAEQTEMEGEKEESLVEGEKEEEEETPPSP) are disordered. Basic and acidic residues predominate over residues 575-586 (ASMEETSTRSEL). The segment covering 587–598 (ELAEQTEMEGEK) has biased composition (acidic residues). A coiled-coil region spans residues 691–724 (LTQRAKLLLENSSLEQQNTELQALLQQYLNSKIN).

Belongs to the DRC1 family. As to quaternary structure, component of the nexin-dynein regulatory complex (N-DRC). Interacts with CCDC65/DRC2, DRC3, GAS8/DRC4 and TCTE1/DRC5.

The protein resides in the cytoplasm. It is found in the cytoskeleton. The protein localises to the cilium axoneme. Its subcellular location is the flagellum axoneme. Component of the nexin-dynein regulatory complex (N-DRC) a key regulator of ciliary/flagellar motility which maintains the alignment and integrity of the distal axoneme and regulates microtubule sliding in motile axonemes. Plays a critical role in the assembly of N-DRC and also stabilizes the assembly of multiple inner dynein arms and radial spokes. Coassembles with CCDC65/DRC2 to form a central scaffold needed for assembly of the N-DRC and its attachment to the outer doublet microtubules. The sequence is that of Dynein regulatory complex protein 1 (DRC1) from Homo sapiens (Human).